A 255-amino-acid chain; its full sequence is Pyridoxine 5'-phosphate synthase (255 aa).

N6 contributes to the 3-amino-2-oxopropyl phosphate binding site. 8-9 (DH) is a 1-deoxy-D-xylulose 5-phosphate binding site. Residue R17 participates in 3-amino-2-oxopropyl phosphate binding. The active-site Proton acceptor is H41. Residues R43 and H48 each coordinate 1-deoxy-D-xylulose 5-phosphate. Catalysis depends on E68, which acts as the Proton acceptor. Position 96 (T96) interacts with 1-deoxy-D-xylulose 5-phosphate. The active-site Proton donor is the H208. Residues G209 and 230 to 231 (GQ) contribute to the 3-amino-2-oxopropyl phosphate site.

It belongs to the PNP synthase family. As to quaternary structure, homooctamer; tetramer of dimers.

The protein resides in the cytoplasm. The enzyme catalyses 3-amino-2-oxopropyl phosphate + 1-deoxy-D-xylulose 5-phosphate = pyridoxine 5'-phosphate + phosphate + 2 H2O + H(+). Its pathway is cofactor biosynthesis; pyridoxine 5'-phosphate biosynthesis; pyridoxine 5'-phosphate from D-erythrose 4-phosphate: step 5/5. Its function is as follows. Catalyzes the complicated ring closure reaction between the two acyclic compounds 1-deoxy-D-xylulose-5-phosphate (DXP) and 3-amino-2-oxopropyl phosphate (1-amino-acetone-3-phosphate or AAP) to form pyridoxine 5'-phosphate (PNP) and inorganic phosphate. This is Pyridoxine 5'-phosphate synthase from Campylobacter lari (strain RM2100 / D67 / ATCC BAA-1060).